The following is a 369-amino-acid chain: MSTGLRYKSKLATPEDKQDIDKQYVGFATLPNQVHRKSVKKGFDFTLMVAGESGLGKSTLVHSLFLTDLYKDRKLLSAEERINQTVEILKHTVDIEEKGVKLKLTIVDTPGFGDAVNNSECWKPITDYVDQQFEQYFRDESGLNRKNIQDNRVHCCLYFISPFGHGLRPVDVGFMKALHEKVNIVPLIAKADCLVPSEIRKLKDRIREEIDKFGIHVYQFPECDSDEDEDFKQQDRELKESAPFAVIGSNTVVEAKGQRVRGRLYPWGIVEVENQAHCDFVKLRNMLIRTHMHDLKDVTCDVHYENYRAHCIQQMTSKLTQDSRMESPIPILPLPTPDAETEKLIRMKDEELRRMQEMLQKMKQQMQDQ.

Position 13 is a phosphothreonine (T13). The region spanning 41–314 (KGFDFTLMVA…ENYRAHCIQQ (274 aa)) is the Septin-type G domain. Residues 51-58 (GESGLGKS) form a G1 motif region. GTP is bound by residues 51 to 58 (GESGLGKS), T85, and G111. Residues 108–111 (DTPG) are G3 motif. R168 is subject to Omega-N-methylarginine. Positions 189 to 192 (AKAD) are G4 motif. 190-198 (KADCLVPSE) serves as a coordination point for GTP. S225 is modified (phosphoserine). Residues G248 and R263 each contribute to the GTP site. At S327 the chain carries Phosphoserine. At T336 the chain carries Phosphothreonine. Residues 338–369 (DAETEKLIRMKDEELRRMQEMLQKMKQQMQDQ) adopt a coiled-coil conformation.

This sequence belongs to the TRAFAC class TrmE-Era-EngA-EngB-Septin-like GTPase superfamily. Septin GTPase family. As to quaternary structure, septins polymerize into heterooligomeric protein complexes that form filaments, and can associate with cellular membranes, actin filaments and microtubules. GTPase activity is required for filament formation. Interacts with SEPTIN2 and SEPTIN5. Interaction with SEPTIN4 not detected. In platelets, associated with a complex containing STX4. Interacts with PRKN; this interaction leads to SEPTIN5 ubiquitination and degradation. Interacts with DYRK1A. Interacts with STX1A; in the cerebellar cortex. Post-translationally, phosphorylated by DYRK1A.

It localises to the cytoplasm. It is found in the cytoskeleton. Filament-forming cytoskeletal GTPase. Involved in cytokinesis (Potential). May play a role in platelet secretion. In Mus musculus (Mouse), this protein is Septin-5.